A 96-amino-acid chain; its full sequence is Prokineticin Bm8-f (96 aa).

The first 19 residues, 1–19 (MKCFAQIVVLLLVIAFSHG), serve as a signal peptide directing secretion. 5 cysteine pairs are disulfide-bonded: cysteine 26–cysteine 38, cysteine 32–cysteine 50, cysteine 37–cysteine 78, cysteine 60–cysteine 86, and cysteine 80–cysteine 95.

This sequence belongs to the AVIT (prokineticin) family. As to expression, expressed by the skin glands.

The protein resides in the secreted. Functionally, potent agonist for both PKR1/PROKR1 and PKR2/PROKR2, and inducer of a potent and long-lasting hyperalgesia. Also potentiates capsaicin-induced TRPV1 current, when tested on DRG neurons. At subnanomolar concentrations, this protein both induces potent chemotaxis of macrophages and stimulates LPS-induced production of the pro-inflammatory cytokines IL-1 and IL-12. In vivo, potently stimulates the contraction of the guinea-pig gastrointestinal (GI) smooth muscle (nanomolar concentration). This chain is Prokineticin Bm8-f, found in Bombina maxima (Giant fire-bellied toad).